The primary structure comprises 573 residues: Proline--tRNA ligase (573 aa).

Belongs to the class-II aminoacyl-tRNA synthetase family. ProS type 1 subfamily. As to quaternary structure, homodimer.

The protein resides in the cytoplasm. It carries out the reaction tRNA(Pro) + L-proline + ATP = L-prolyl-tRNA(Pro) + AMP + diphosphate. In terms of biological role, catalyzes the attachment of proline to tRNA(Pro) in a two-step reaction: proline is first activated by ATP to form Pro-AMP and then transferred to the acceptor end of tRNA(Pro). As ProRS can inadvertently accommodate and process non-cognate amino acids such as alanine and cysteine, to avoid such errors it has two additional distinct editing activities against alanine. One activity is designated as 'pretransfer' editing and involves the tRNA(Pro)-independent hydrolysis of activated Ala-AMP. The other activity is designated 'posttransfer' editing and involves deacylation of mischarged Ala-tRNA(Pro). The misacylated Cys-tRNA(Pro) is not edited by ProRS. The polypeptide is Proline--tRNA ligase (Caldanaerobacter subterraneus subsp. tengcongensis (strain DSM 15242 / JCM 11007 / NBRC 100824 / MB4) (Thermoanaerobacter tengcongensis)).